Consider the following 155-residue polypeptide: Small ribosomal subunit protein uS7c (155 aa).

This sequence belongs to the universal ribosomal protein uS7 family. In terms of assembly, part of the 30S ribosomal subunit.

Its subcellular location is the plastid. It localises to the chloroplast. Functionally, one of the primary rRNA binding proteins, it binds directly to 16S rRNA where it nucleates assembly of the head domain of the 30S subunit. This is Small ribosomal subunit protein uS7c (rps7) from Hydrastis canadensis (Goldenseal).